Here is a 348-residue protein sequence, read N- to C-terminus: Dihydroorotase (348 aa).

Residues histidine 14 and histidine 16 each coordinate Zn(2+). Residues 16–18 and asparagine 42 each bind substrate; that span reads HLR. Positions 100, 137, and 175 each coordinate Zn(2+). An N6-carboxylysine modification is found at lysine 100. A substrate-binding site is contributed by histidine 137. Leucine 220 is a binding site for substrate. A Zn(2+)-binding site is contributed by aspartate 248. Residue aspartate 248 is part of the active site. Residues histidine 252 and alanine 264 each coordinate substrate.

This sequence belongs to the metallo-dependent hydrolases superfamily. DHOase family. Class II DHOase subfamily. In terms of assembly, homodimer. It depends on Zn(2+) as a cofactor.

It catalyses the reaction (S)-dihydroorotate + H2O = N-carbamoyl-L-aspartate + H(+). It participates in pyrimidine metabolism; UMP biosynthesis via de novo pathway; (S)-dihydroorotate from bicarbonate: step 3/3. Its function is as follows. Catalyzes the reversible cyclization of carbamoyl aspartate to dihydroorotate. This chain is Dihydroorotase, found in Synechococcus sp. (strain CC9605).